Reading from the N-terminus, the 71-residue chain is uncharacterized protein (71 aa).

This is an uncharacterized protein from Stutzerimonas stutzeri (strain A1501) (Pseudomonas stutzeri).